The chain runs to 286 residues: Pyridoxal kinase PdxY (286 aa).

Substrate is bound by residues serine 9 and 44–45 (TQ). Residues aspartate 111, alanine 143, glutamate 148, lysine 181, and 208–211 (RPLV) each bind ATP. Substrate is bound at residue aspartate 222.

It belongs to the pyridoxine kinase family. PdxY subfamily. In terms of assembly, homodimer. It depends on Mg(2+) as a cofactor.

It catalyses the reaction pyridoxal + ATP = pyridoxal 5'-phosphate + ADP + H(+). Its pathway is cofactor metabolism; pyridoxal 5'-phosphate salvage; pyridoxal 5'-phosphate from pyridoxal: step 1/1. Functionally, pyridoxal kinase involved in the salvage pathway of pyridoxal 5'-phosphate (PLP). Catalyzes the phosphorylation of pyridoxal to PLP. This is Pyridoxal kinase PdxY from Pectobacterium atrosepticum (strain SCRI 1043 / ATCC BAA-672) (Erwinia carotovora subsp. atroseptica).